Here is a 559-residue protein sequence, read N- to C-terminus: Heterochromatin protein 1-binding protein 3 (559 aa).

Positions methionine 1–lysine 132 are disordered. Basic and acidic residues-rich tracts occupy residues threonine 51 to alanine 68 and glutamate 96 to lysine 128. 3 H15 domains span residues serine 158 to serine 233, glutamine 256 to lysine 331, and glycine 339 to phenylalanine 414. The PxVxL motif motif lies at glutamine 256–leucine 260. The interval aspartate 421–lysine 559 is disordered. Residues glutamine 429 to glutamate 459 are compositionally biased toward acidic residues. Basic residues predominate over residues lysine 463 to lysine 515. A compositionally biased stretch (low complexity) spans proline 516–proline 533. The segment covering serine 549–lysine 559 has biased composition (basic residues).

It is found in the nucleus. The protein resides in the chromosome. Functionally, component of heterochromatin that maintains heterochromatin integrity during G1/S progression and regulates the duration of G1 phase to critically influence cell proliferative capacity. This Gallus gallus (Chicken) protein is Heterochromatin protein 1-binding protein 3 (HP1BP3).